Here is a 429-residue protein sequence, read N- to C-terminus: Ribosomal RNA small subunit methyltransferase B (429 aa).

S-adenosyl-L-methionine is bound by residues 254 to 260 (CAAPGGK), Asp-277, Asp-303, and Asp-322. Cys-375 (nucleophile) is an active-site residue.

The protein belongs to the class I-like SAM-binding methyltransferase superfamily. RsmB/NOP family.

The protein resides in the cytoplasm. The catalysed reaction is cytidine(967) in 16S rRNA + S-adenosyl-L-methionine = 5-methylcytidine(967) in 16S rRNA + S-adenosyl-L-homocysteine + H(+). Functionally, specifically methylates the cytosine at position 967 (m5C967) of 16S rRNA. This Escherichia coli O157:H7 protein is Ribosomal RNA small subunit methyltransferase B.